The sequence spans 276 residues: Rhomboid protease GlpG (276 aa).

The next 6 membrane-spanning stretches (helical) occupy residues 94-114 (GPVT…MQIL), 142-162 (ALMH…WYLG), 169-189 (LGSG…GYVQ), 192-212 (FSGP…GYVW), 229-249 (LIIF…GMSM), and 250-270 (ANGA…VDSL). Ser-201 functions as the Nucleophile in the catalytic mechanism. The active site involves His-254.

This sequence belongs to the peptidase S54 family.

It localises to the cell inner membrane. It catalyses the reaction Cleaves type-1 transmembrane domains using a catalytic dyad composed of serine and histidine that are contributed by different transmembrane domains.. Rhomboid-type serine protease that catalyzes intramembrane proteolysis. The protein is Rhomboid protease GlpG of Escherichia coli O45:K1 (strain S88 / ExPEC).